The primary structure comprises 79 residues: D-alanyl carrier protein (79 aa).

In terms of domain architecture, Carrier spans 1 to 77 (MDIKSEVIEI…KIIAGIVELQ (77 aa)). S35 bears the O-(pantetheine 4'-phosphoryl)serine mark.

This sequence belongs to the DltC family. In terms of processing, 4'-phosphopantetheine is transferred from CoA to a specific serine of apo-DCP.

Its subcellular location is the cytoplasm. It participates in cell wall biogenesis; lipoteichoic acid biosynthesis. Its function is as follows. Carrier protein involved in the D-alanylation of lipoteichoic acid (LTA). The loading of thioester-linked D-alanine onto DltC is catalyzed by D-alanine--D-alanyl carrier protein ligase DltA. The DltC-carried D-alanyl group is further transferred to cell membrane phosphatidylglycerol (PG) by forming an ester bond, probably catalyzed by DltD. D-alanylation of LTA plays an important role in modulating the properties of the cell wall in Gram-positive bacteria, influencing the net charge of the cell wall. In Streptococcus pneumoniae serotype 2 (strain D39 / NCTC 7466), this protein is D-alanyl carrier protein.